A 514-amino-acid polypeptide reads, in one-letter code: Na(+)/H(+) antiporter NhaB (514 aa).

The next 12 membrane-spanning stretches (helical) occupy residues 23–43 (LALLVFLIINPLTFFTNSFVA), 52–72 (IFTLAMALKCYPLLPGGLLAI), 97–117 (LLLMFMVAGIYFMKQLLLFIF), 120–140 (LLLSIRSKMVLSLAFCVAAAF), 144–164 (FLDALTVVAVVISVAVGFYGI), 202–222 (LMMHAGVGTALGGVMTMVGEP), 238–258 (FFLRMSPVTVPVLVCGLLTCM), 303–323 (AIIGVWLVTALALHLAEVGLI), 357–377 (LTVFFSIVAVIIDQHLFAPII), 391–411 (LFYLFNGLLSSISDNVFVGTI), 447–467 (ATPNGQAAFLFLLTSALAPLI), and 475–495 (VWMALPYTIILTLVGLLCVEF).

The protein belongs to the NhaB Na(+)/H(+) (TC 2.A.34) antiporter family.

The protein resides in the cell inner membrane. The enzyme catalyses 2 Na(+)(in) + 3 H(+)(out) = 2 Na(+)(out) + 3 H(+)(in). Its function is as follows. Na(+)/H(+) antiporter that extrudes sodium in exchange for external protons. This is Na(+)/H(+) antiporter NhaB from Salmonella arizonae (strain ATCC BAA-731 / CDC346-86 / RSK2980).